The primary structure comprises 101 residues: Small ribosomal subunit protein uS14 (101 aa).

The protein belongs to the universal ribosomal protein uS14 family. In terms of assembly, part of the 30S ribosomal subunit. Contacts proteins S3 and S10.

In terms of biological role, binds 16S rRNA, required for the assembly of 30S particles and may also be responsible for determining the conformation of the 16S rRNA at the A site. The protein is Small ribosomal subunit protein uS14 of Erythrobacter litoralis (strain HTCC2594).